Reading from the N-terminus, the 325-residue chain is Succinylglutamate desuccinylase (325 aa).

Positions 51, 54, and 148 each coordinate Zn(2+). Residue Glu-211 is part of the active site.

Belongs to the AspA/AstE family. Succinylglutamate desuccinylase subfamily. The cofactor is Zn(2+).

The catalysed reaction is N-succinyl-L-glutamate + H2O = L-glutamate + succinate. The protein operates within amino-acid degradation; L-arginine degradation via AST pathway; L-glutamate and succinate from L-arginine: step 5/5. Its function is as follows. Transforms N(2)-succinylglutamate into succinate and glutamate. The chain is Succinylglutamate desuccinylase from Photorhabdus laumondii subsp. laumondii (strain DSM 15139 / CIP 105565 / TT01) (Photorhabdus luminescens subsp. laumondii).